The chain runs to 474 residues: Aspartyl/glutamyl-tRNA(Asn/Gln) amidotransferase subunit B (474 aa).

Belongs to the GatB/GatE family. GatB subfamily. In terms of assembly, heterotrimer of A, B and C subunits.

It carries out the reaction L-glutamyl-tRNA(Gln) + L-glutamine + ATP + H2O = L-glutaminyl-tRNA(Gln) + L-glutamate + ADP + phosphate + H(+). The enzyme catalyses L-aspartyl-tRNA(Asn) + L-glutamine + ATP + H2O = L-asparaginyl-tRNA(Asn) + L-glutamate + ADP + phosphate + 2 H(+). In terms of biological role, allows the formation of correctly charged Asn-tRNA(Asn) or Gln-tRNA(Gln) through the transamidation of misacylated Asp-tRNA(Asn) or Glu-tRNA(Gln) in organisms which lack either or both of asparaginyl-tRNA or glutaminyl-tRNA synthetases. The reaction takes place in the presence of glutamine and ATP through an activated phospho-Asp-tRNA(Asn) or phospho-Glu-tRNA(Gln). In Methanospirillum hungatei JF-1 (strain ATCC 27890 / DSM 864 / NBRC 100397 / JF-1), this protein is Aspartyl/glutamyl-tRNA(Asn/Gln) amidotransferase subunit B.